The chain runs to 337 residues: Ferredoxin--NADP reductase (337 aa).

FAD-binding residues include Asp-35, Gln-43, Tyr-48, Ala-88, Phe-122, Asp-289, and Thr-330.

The protein belongs to the ferredoxin--NADP reductase type 2 family. As to quaternary structure, homodimer. Requires FAD as cofactor.

It carries out the reaction 2 reduced [2Fe-2S]-[ferredoxin] + NADP(+) + H(+) = 2 oxidized [2Fe-2S]-[ferredoxin] + NADPH. This is Ferredoxin--NADP reductase from Ehrlichia ruminantium (strain Gardel).